Here is a 148-residue protein sequence, read N- to C-terminus: Large ribosomal subunit protein bL9 (148 aa).

It belongs to the bacterial ribosomal protein bL9 family.

Functionally, binds to the 23S rRNA. The polypeptide is Large ribosomal subunit protein bL9 (Heliobacterium modesticaldum (strain ATCC 51547 / Ice1)).